Here is a 414-residue protein sequence, read N- to C-terminus: Glutamyl-tRNA reductase (414 aa).

Substrate-binding positions include 48-51 (TCNR), serine 104, 109-111 (EAQ), and glutamine 115. Cysteine 49 functions as the Nucleophile in the catalytic mechanism. 184 to 189 (GAGEMI) lines the NADP(+) pocket.

It belongs to the glutamyl-tRNA reductase family. In terms of assembly, homodimer.

The catalysed reaction is (S)-4-amino-5-oxopentanoate + tRNA(Glu) + NADP(+) = L-glutamyl-tRNA(Glu) + NADPH + H(+). It functions in the pathway porphyrin-containing compound metabolism; protoporphyrin-IX biosynthesis; 5-aminolevulinate from L-glutamyl-tRNA(Glu): step 1/2. In terms of biological role, catalyzes the NADPH-dependent reduction of glutamyl-tRNA(Glu) to glutamate 1-semialdehyde (GSA). This is Glutamyl-tRNA reductase from Methylobacillus flagellatus (strain ATCC 51484 / DSM 6875 / VKM B-1610 / KT).